The following is a 434-amino-acid chain: Serine protease HTRA2, mitochondrial (434 aa).

The segment at 34–65 (YSNNTANITTDSSSSSNNNSNRNNKNDNNNED) is disordered. Positions 35 to 60 (SNNTANITTDSSSSSNNNSNRNNKND) are enriched in low complexity. The helical transmembrane segment at 74-92 (LVRFFVPFSLGAVASSLVM) threads the bilayer. An IAP-binding motif is present at residues 85 to 88 (AVAS). Residues 151-314 (SNGSGFVIEQ…IPIDYVKVFL (164 aa)) form a serine protease region. Active-site charge relay system residues include His-169, Asp-201, and Ser-278. The PDZ domain maps to 337–424 (MGITMLTLTP…NMIIMRGVKQ (88 aa)).

This sequence belongs to the peptidase S1C family. In terms of assembly, interacts with th/DIAP1 (via BIR 2 domain).

Its subcellular location is the mitochondrion intermembrane space. It is found in the mitochondrion membrane. It catalyses the reaction Cleavage of non-polar aliphatic amino-acids at the P1 position, with a preference for Val, Ile and Met. At the P2 and P3 positions, Arg is selected most strongly with a secondary preference for other hydrophilic residues.. Functionally, serine protease that shows proteolytic activity against a non-specific substrate beta-casein. Promotes or induces cell death either by direct binding to and inhibition of BIRC proteins (also called inhibitor of apoptosis proteins, IAPs), leading to an increase in caspase activity, or by a BIRC inhibition-independent, caspase-independent and serine protease activity-dependent mechanism. Can antagonize antiapoptotic activity of th/Diap1 by directly inducing the degradation of th/Diap1. This Drosophila willistoni (Fruit fly) protein is Serine protease HTRA2, mitochondrial.